A 245-amino-acid chain; its full sequence is Ribonuclease PH (245 aa).

Phosphate is bound by residues Arg-86 and 124-126 (GTR).

This sequence belongs to the RNase PH family. As to quaternary structure, homohexameric ring arranged as a trimer of dimers.

The catalysed reaction is tRNA(n+1) + phosphate = tRNA(n) + a ribonucleoside 5'-diphosphate. Phosphorolytic 3'-5' exoribonuclease that plays an important role in tRNA 3'-end maturation. Removes nucleotide residues following the 3'-CCA terminus of tRNAs; can also add nucleotides to the ends of RNA molecules by using nucleoside diphosphates as substrates, but this may not be physiologically important. Probably plays a role in initiation of 16S rRNA degradation (leading to ribosome degradation) during starvation. The protein is Ribonuclease PH of Bacillus cereus (strain ATCC 10987 / NRS 248).